We begin with the raw amino-acid sequence, 155 residues long: Nodulin-related protein 2 (155 aa).

The residue at position 1 (Met-1) is an N-acetylmethionine. 2 disordered regions span residues 1-37 (MNFI…PATN) and 85-155 (DEKS…GFLK). Residues 95 to 106 (DKAEKYLNDYES) show a composition bias toward basic and acidic residues. Residues 120-130 (SQAEPASQPEP) show a composition bias toward low complexity.

In terms of assembly, interacts with DEK3.

Its function is as follows. May be a negative regulator of the ABA signaling/synthesis pathway. In Arabidopsis thaliana (Mouse-ear cress), this protein is Nodulin-related protein 2.